Here is a 284-residue protein sequence, read N- to C-terminus: Pantothenate synthetase (284 aa).

32-39 provides a ligand contact to ATP; it reads MGALHDGH. The Proton donor role is filled by His-39. Gln-63 is a binding site for (R)-pantoate. A beta-alanine-binding site is contributed by Gln-63. 149–152 is a binding site for ATP; the sequence is GEKD. Residue Gln-155 participates in (R)-pantoate binding. ATP is bound by residues Ile-178 and 186–189; that span reads MSSR.

It belongs to the pantothenate synthetase family. As to quaternary structure, homodimer.

It is found in the cytoplasm. The catalysed reaction is (R)-pantoate + beta-alanine + ATP = (R)-pantothenate + AMP + diphosphate + H(+). The protein operates within cofactor biosynthesis; (R)-pantothenate biosynthesis; (R)-pantothenate from (R)-pantoate and beta-alanine: step 1/1. Its function is as follows. Catalyzes the condensation of pantoate with beta-alanine in an ATP-dependent reaction via a pantoyl-adenylate intermediate. This Roseobacter denitrificans (strain ATCC 33942 / OCh 114) (Erythrobacter sp. (strain OCh 114)) protein is Pantothenate synthetase.